We begin with the raw amino-acid sequence, 148 residues long: uncharacterized protein (148 aa).

Residues 97–112 (KKLDEQRMPGKPKNTE) show a composition bias toward basic and acidic residues. Positions 97-126 (KKLDEQRMPGKPKNTEGSKSTIRKKANVGN) are disordered.

This is an uncharacterized protein from Caenorhabditis elegans.